Consider the following 66-residue polypeptide: Large ribosomal subunit protein bL35 (66 aa).

Residues 1-46 are compositionally biased toward basic residues; the sequence is MPKMKTHRASAKRFKRTGNGGLKRHHAFTGHRFHGKTKKQRRHLRK. Positions 1 to 50 are disordered; that stretch reads MPKMKTHRASAKRFKRTGNGGLKRHHAFTGHRFHGKTKKQRRHLRKAAMV.

The protein belongs to the bacterial ribosomal protein bL35 family.

The protein is Large ribosomal subunit protein bL35 of Lactobacillus delbrueckii subsp. bulgaricus (strain ATCC 11842 / DSM 20081 / BCRC 10696 / JCM 1002 / NBRC 13953 / NCIMB 11778 / NCTC 12712 / WDCM 00102 / Lb 14).